Here is a 425-residue protein sequence, read N- to C-terminus: UDP-N-acetylglucosamine 1-carboxyvinyltransferase (425 aa).

22–23 (KN) contacts phosphoenolpyruvate. UDP-N-acetyl-alpha-D-glucosamine is bound at residue R98. The active-site Proton donor is the C122. C122 bears the 2-(S-cysteinyl)pyruvic acid O-phosphothioketal mark. UDP-N-acetyl-alpha-D-glucosamine contacts are provided by residues 127 to 131 (RPVDQ), D313, and I335.

It belongs to the EPSP synthase family. MurA subfamily.

The protein localises to the cytoplasm. The catalysed reaction is phosphoenolpyruvate + UDP-N-acetyl-alpha-D-glucosamine = UDP-N-acetyl-3-O-(1-carboxyvinyl)-alpha-D-glucosamine + phosphate. It functions in the pathway cell wall biogenesis; peptidoglycan biosynthesis. Cell wall formation. Adds enolpyruvyl to UDP-N-acetylglucosamine. This chain is UDP-N-acetylglucosamine 1-carboxyvinyltransferase, found in Xylella fastidiosa (strain 9a5c).